Consider the following 107-residue polypeptide: UPF0145 protein Ent638_1382 (107 aa).

It belongs to the UPF0145 family.

The polypeptide is UPF0145 protein Ent638_1382 (Enterobacter sp. (strain 638)).